A 1433-amino-acid polypeptide reads, in one-letter code: Regulatory protein CAT8 (1433 aa).

The span at 20-38 (GSQALSGPSISNRTSSSEA) shows a compositional bias: polar residues. The tract at residues 20-40 (GSQALSGPSISNRTSSSEANP) is disordered. A DNA-binding region (zn(2)-C6 fungal-type) is located at residues 70-97 (CDRCRSKKTRCDGKRPQCSQCAAVGFEC). Residues 936–946 (KPLFGSQSKNS) are compositionally biased toward polar residues. Disordered stretches follow at residues 936–1024 (KPLF…DTKK), 1137–1162 (QNPE…NNLS), 1200–1236 (SASA…ILGS), and 1324–1433 (LNPT…QNAK). Composition is skewed to basic and acidic residues over residues 947 to 965 (LENR…EHEY) and 994 to 1005 (LKYEKDAKRNAK). 3 stretches are compositionally biased toward polar residues: residues 1138 to 1162 (NPEN…NNLS), 1221 to 1235 (PPST…SILG), and 1326 to 1348 (PTDS…SNQR). Positions 1349 to 1362 (SLSSGNDSKGDSSS) are enriched in low complexity. Polar residues-rich tracts occupy residues 1363-1391 (QENS…SGPS) and 1418-1433 (SNTD…QNAK).

Could be the target of the SNF1/CAT1 - SNF4/CAT3 kinase complex.

It is found in the nucleus. Its function is as follows. Activator of the gluconeogenic enzymes FBP1 and PCK1 genes. This Saccharomyces cerevisiae (strain ATCC 204508 / S288c) (Baker's yeast) protein is Regulatory protein CAT8 (CAT8).